The primary structure comprises 122 residues: Large ribosomal subunit protein bL19 (122 aa).

It belongs to the bacterial ribosomal protein bL19 family.

Functionally, this protein is located at the 30S-50S ribosomal subunit interface and may play a role in the structure and function of the aminoacyl-tRNA binding site. This chain is Large ribosomal subunit protein bL19, found in Prosthecochloris aestuarii (strain DSM 271 / SK 413).